The following is a 502-amino-acid chain: Zinc finger C3HC-type protein 1 (502 aa).

The residue at position 2 (Ala2) is an N-acetylalanine. The residue at position 24 (Ser24) is a Phosphoserine. Thr28 carries the phosphothreonine modification. The disordered stretch occupies residues 36 to 73 (IDEGIAPEEGGVDAKDTSATSQSVNGSPQAEQPSLEST). Residues 52-72 (TSATSQSVNGSPQAEQPSLES) are compositionally biased toward polar residues. Phosphoserine occurs at positions 58 and 62. Position 84 is a phosphothreonine (Thr84). The segment at 102–156 (CAKYGWVTVECDMLKCSSCQAFLCASLQPAFDFDRYKQRCAELKKALCTAHEKFC) adopts a C3HC-type zinc-finger fold. Residues 170 to 210 (LPLDEPAILVSEFLDRFQSLCHLDLQLPSLRPEDLKTMCLT) form an F-box-like region. The tract at residues 302–423 (SSPIPGLEGR…SSRSFFDPTS (122 aa)) is disordered. Ser321 and Ser329 each carry phosphoserine. The span at 327–338 (TRSQDATFSPGS) shows a compositional bias: polar residues. Phosphothreonine is present on Thr333. Ser335, Ser338, Ser344, Ser354, Ser359, and Ser370 each carry phosphoserine. Polar residues predominate over residues 351 to 360 (RTRSWDSSSP). Residues 371 to 380 (PTTRTRPVTR) are compositionally biased toward low complexity. Ser381 is modified (phosphoserine). 2 positions are modified to phosphothreonine: Thr384 and Thr387. Ser395 bears the Phosphoserine mark. The short motif at 396-402 (PLRKAKR) is the Nuclear localization signal element. Phosphoserine is present on residues Ser407 and Ser483. A compositionally biased stretch (low complexity) spans 407 to 422 (SSSSSDTSSRSFFDPT).

In terms of assembly, interacts with TPR; this interaction mediates ZC3HC1 nuclear envelopes (NE)-association but also required for proper positioning of a substantial amount of TPR at the nuclear basket (NB). Phosphorylated. May also be weakly phosphorylated on Tyr residues. As to expression, widely expressed. Highly expressed in heart, skeletal muscle and testis. Expressed in brain, placenta, lung, kidney, liver, pancreas, spleen, thymus, prostate, ovary small intestine and colon. Weakly or not expressed in leukocytes.

The protein resides in the nucleus. Its subcellular location is the nucleus envelope. Required for proper positioning of a substantial amount of TPR at the nuclear basket (NB) through interaction with TPR. The sequence is that of Zinc finger C3HC-type protein 1 from Homo sapiens (Human).